The chain runs to 378 residues: Chaperone protein DnaJ 2 (378 aa).

Residues 4–68 (DYYAVLGVRR…QKKQVYDLGG (65 aa)) form the J domain. Residues 130–212 (GTTKDIQVDT…CAGDGRVRSR (83 aa)) form a CR-type zinc finger. Cysteine 143, cysteine 146, cysteine 160, cysteine 163, cysteine 186, cysteine 189, cysteine 200, and cysteine 203 together coordinate Zn(2+). CXXCXGXG motif repeat units follow at residues 143–150 (CNTCNGEG), 160–167 (CDMCRGRG), 186–193 (CPQCQGFG), and 200–207 (CPECAGDG). 2 disordered regions span residues 297–319 (RPGTQSGQSIPKHGRGVTHLRGG) and 351–378 (RGEERPTGQFQPGQQGLFSRLKDAFNGR). The segment covering 358–367 (GQFQPGQQGL) has biased composition (polar residues).

This sequence belongs to the DnaJ family. In terms of assembly, homodimer. Zn(2+) serves as cofactor.

The protein resides in the cytoplasm. In terms of biological role, participates actively in the response to hyperosmotic and heat shock by preventing the aggregation of stress-denatured proteins and by disaggregating proteins, also in an autonomous, DnaK-independent fashion. Unfolded proteins bind initially to DnaJ; upon interaction with the DnaJ-bound protein, DnaK hydrolyzes its bound ATP, resulting in the formation of a stable complex. GrpE releases ADP from DnaK; ATP binding to DnaK triggers the release of the substrate protein, thus completing the reaction cycle. Several rounds of ATP-dependent interactions between DnaJ, DnaK and GrpE are required for fully efficient folding. Also involved, together with DnaK and GrpE, in the DNA replication of plasmids through activation of initiation proteins. The sequence is that of Chaperone protein DnaJ 2 from Streptomyces coelicolor (strain ATCC BAA-471 / A3(2) / M145).